Reading from the N-terminus, the 329-residue chain is GTPase Obg (329 aa).

The Obg domain occupies Met1–Leu159. The 168-residue stretch at Ser160–Gln327 folds into the OBG-type G domain. GTP-binding positions include Gly166–Ser173, Phe191–Thr195, Asp212–Gly215, Thr279–Asp282, and Ser308–Tyr310. Residues Ser173 and Thr193 each contribute to the Mg(2+) site.

The protein belongs to the TRAFAC class OBG-HflX-like GTPase superfamily. OBG GTPase family. In terms of assembly, monomer. Mg(2+) is required as a cofactor.

Its subcellular location is the cytoplasm. An essential GTPase which binds GTP, GDP and possibly (p)ppGpp with moderate affinity, with high nucleotide exchange rates and a fairly low GTP hydrolysis rate. Plays a role in control of the cell cycle, stress response, ribosome biogenesis and in those bacteria that undergo differentiation, in morphogenesis control. The chain is GTPase Obg from Orientia tsutsugamushi (strain Ikeda) (Rickettsia tsutsugamushi).